The primary structure comprises 130 residues: Small ribosomal subunit protein uS8 (130 aa).

Belongs to the universal ribosomal protein uS8 family. Part of the 30S ribosomal subunit. Contacts proteins S5 and S12.

In terms of biological role, one of the primary rRNA binding proteins, it binds directly to 16S rRNA central domain where it helps coordinate assembly of the platform of the 30S subunit. The protein is Small ribosomal subunit protein uS8 of Idiomarina loihiensis (strain ATCC BAA-735 / DSM 15497 / L2-TR).